The sequence spans 308 residues: Protein translocase subunit SecF (308 aa).

Transmembrane regions (helical) follow at residues 28–48, 140–160, 164–184, 194–214, 246–266, and 272–292; these read SIIL…NFGI, IEAG…YIWV, WYFG…ALGF, LSTI…SVVI, ILTV…GGEA, and VLVF…SAPI.

It belongs to the SecD/SecF family. SecF subfamily. In terms of assembly, forms a complex with SecD. Part of the essential Sec protein translocation apparatus which comprises SecA, SecYEG and auxiliary proteins SecDF-YajC and YidC.

The protein resides in the cell inner membrane. Its function is as follows. Part of the Sec protein translocase complex. Interacts with the SecYEG preprotein conducting channel. SecDF uses the proton motive force (PMF) to complete protein translocation after the ATP-dependent function of SecA. The sequence is that of Protein translocase subunit SecF from Rickettsia felis (strain ATCC VR-1525 / URRWXCal2) (Rickettsia azadi).